Reading from the N-terminus, the 281-residue chain is Digeranylgeranylglyceryl phosphate synthase (281 aa).

5 consecutive transmembrane segments (helical) span residues Ile88–Ile108, Ala132–Leu152, Gly200–Phe220, Ile225–Ile245, and Leu261–Val281.

This sequence belongs to the UbiA prenyltransferase family. DGGGP synthase subfamily. It depends on Mg(2+) as a cofactor.

The protein localises to the cell membrane. It catalyses the reaction sn-3-O-(geranylgeranyl)glycerol 1-phosphate + (2E,6E,10E)-geranylgeranyl diphosphate = 2,3-bis-O-(geranylgeranyl)-sn-glycerol 1-phosphate + diphosphate. Its pathway is membrane lipid metabolism; glycerophospholipid metabolism. Its function is as follows. Prenyltransferase that catalyzes the transfer of the geranylgeranyl moiety of geranylgeranyl diphosphate (GGPP) to the C2 hydroxyl of (S)-3-O-geranylgeranylglyceryl phosphate (GGGP). This reaction is the second ether-bond-formation step in the biosynthesis of archaeal membrane lipids. The protein is Digeranylgeranylglyceryl phosphate synthase of Korarchaeum cryptofilum (strain OPF8).